The following is a 143-amino-acid chain: Antiholin-like protein LrgA (143 aa).

A run of 4 helical transmembrane segments spans residues 6 to 26 (VYSF…SNII), 30 to 50 (LPIP…LLCL), 61 to 81 (LGTA…ISVI), and 97 to 117 (VIVV…QFIL).

Belongs to the CidA/LrgA family. LrgA subfamily.

The protein resides in the cell membrane. In terms of biological role, inhibits the expression or activity of extracellular murein hydrolases by interacting, possibly with LrgB, with the holin-like protein CidA. The LrgAB and CidA proteins may affect the proton motive force of the membrane. May be involved in programmed cell death (PCD), possibly triggering PCD in response to antibiotics and environmental stresses. The polypeptide is Antiholin-like protein LrgA (Bacillus anthracis (strain A0248)).